The following is a 182-amino-acid chain: NADH-quinone oxidoreductase subunit I (182 aa).

2 4Fe-4S ferredoxin-type domains span residues 52–82 and 92–121; these read LTRD…LQKA and DFFR…LTPD. Residues C62, C65, C68, C72, C101, C104, C107, and C111 each contribute to the [4Fe-4S] cluster site.

This sequence belongs to the complex I 23 kDa subunit family. As to quaternary structure, NDH-1 is composed of 13 different subunits. Subunits NuoA, H, J, K, L, M, N constitute the membrane sector of the complex. [4Fe-4S] cluster serves as cofactor.

The protein resides in the cell inner membrane. The enzyme catalyses a quinone + NADH + 5 H(+)(in) = a quinol + NAD(+) + 4 H(+)(out). Its function is as follows. NDH-1 shuttles electrons from NADH, via FMN and iron-sulfur (Fe-S) centers, to quinones in the respiratory chain. The immediate electron acceptor for the enzyme in this species is believed to be ubiquinone. Couples the redox reaction to proton translocation (for every two electrons transferred, four hydrogen ions are translocated across the cytoplasmic membrane), and thus conserves the redox energy in a proton gradient. This chain is NADH-quinone oxidoreductase subunit I, found in Pseudomonas fluorescens (strain Pf0-1).